Consider the following 841-residue polypeptide: Alpha-glucuronidase A (841 aa).

The N-terminal stretch at 1-20 is a signal peptide; sequence MRGSNLFQLTLALLLSLVAA. Residues asparagine 51, asparagine 76, asparagine 149, asparagine 222, asparagine 279, asparagine 310, asparagine 343, asparagine 450, asparagine 465, asparagine 527, asparagine 576, asparagine 682, asparagine 723, and asparagine 732 are each glycosylated (N-linked (GlcNAc...) asparagine).

It belongs to the glycosyl hydrolase 67 family.

The protein localises to the secreted. It carries out the reaction an alpha-D-glucuronoside + H2O = D-glucuronate + an alcohol. Functionally, alpha-glucuronidase involved in the hydrolysis of xylan, a major structural heterogeneous polysaccharide found in plant biomass representing the second most abundant polysaccharide in the biosphere, after cellulose. Releases 4-O-methylglucuronic acid from xylan. The sequence is that of Alpha-glucuronidase A (aguA) from Aspergillus tubingensis.